A 66-amino-acid chain; its full sequence is Small archaeal modifier protein 2 (66 aa).

Lysine 58 is covalently cross-linked (Glycyl lysine isopeptide (Lys-Gly) (interchain with G-Cter in SAMP2)). 1-thioglycine; alternate is present on glycine 66. Glycine 66 carries the glycyl adenylate; alternate modification. Residue glycine 66 forms a Glycyl lysine isopeptide (Gly-Lys) (interchain with K-? in acceptor proteins); alternate linkage.

Monomer. Monomeric and polymeric forms interact with NcsA. In terms of processing, the C-terminal glycine is likely acyl-adenylated (-COAMP) by UbaA, and also probably thiocarboxylated (-COSH) to function in sulfur transfer.

Its function is as follows. Functions as a protein modifier covalently attached to lysine residues of substrate proteins, as well as a sulfur carrier in tRNA thiolation. The protein modification process is termed sampylation and involves the formation of an isopeptide bond between the SAMP2 C-terminal glycine carboxylate and the epsilon-amino group of lysine residues on target proteins. Is able to form polymeric chains with itself at Lys-58, similar to ubiquitin and other ubiquitin-like proteins. May serve as a proteolytic signal in the cell to target proteins for degradation by proteasomes. This Haloferax volcanii (strain ATCC 29605 / DSM 3757 / JCM 8879 / NBRC 14742 / NCIMB 2012 / VKM B-1768 / DS2) (Halobacterium volcanii) protein is Small archaeal modifier protein 2 (samp2).